A 338-amino-acid polypeptide reads, in one-letter code: Ferrochelatase (338 aa).

The Fe cation site is built by H207 and E293.

Belongs to the ferrochelatase family.

It localises to the cytoplasm. The enzyme catalyses heme b + 2 H(+) = protoporphyrin IX + Fe(2+). It functions in the pathway porphyrin-containing compound metabolism; protoheme biosynthesis; protoheme from protoporphyrin-IX: step 1/1. Functionally, catalyzes the ferrous insertion into protoporphyrin IX. In Shewanella denitrificans (strain OS217 / ATCC BAA-1090 / DSM 15013), this protein is Ferrochelatase.